Here is an 86-residue protein sequence, read N- to C-terminus: Small ribosomal subunit protein uS17 (86 aa).

Belongs to the universal ribosomal protein uS17 family. In terms of assembly, part of the 30S ribosomal subunit.

One of the primary rRNA binding proteins, it binds specifically to the 5'-end of 16S ribosomal RNA. In Roseiflexus castenholzii (strain DSM 13941 / HLO8), this protein is Small ribosomal subunit protein uS17.